Consider the following 633-residue polypeptide: tRNA uridine 5-carboxymethylaminomethyl modification enzyme MnmG (633 aa).

FAD-binding positions include 13–18, V125, and S180; that span reads GGGHAG. 273–287 contributes to the NAD(+) binding site; that stretch reads GPRYCPSIEDKITRF. An FAD-binding site is contributed by Q370.

The protein belongs to the MnmG family. Homodimer. Heterotetramer of two MnmE and two MnmG subunits. FAD is required as a cofactor.

The protein localises to the cytoplasm. NAD-binding protein involved in the addition of a carboxymethylaminomethyl (cmnm) group at the wobble position (U34) of certain tRNAs, forming tRNA-cmnm(5)s(2)U34. The polypeptide is tRNA uridine 5-carboxymethylaminomethyl modification enzyme MnmG (Alteromonas mediterranea (strain DSM 17117 / CIP 110805 / LMG 28347 / Deep ecotype)).